Consider the following 96-residue polypeptide: Co-chaperonin GroES (96 aa).

This sequence belongs to the GroES chaperonin family. Heptamer of 7 subunits arranged in a ring. Interacts with the chaperonin GroEL.

It is found in the cytoplasm. Together with the chaperonin GroEL, plays an essential role in assisting protein folding. The GroEL-GroES system forms a nano-cage that allows encapsulation of the non-native substrate proteins and provides a physical environment optimized to promote and accelerate protein folding. GroES binds to the apical surface of the GroEL ring, thereby capping the opening of the GroEL channel. The protein is Co-chaperonin GroES of Shewanella denitrificans (strain OS217 / ATCC BAA-1090 / DSM 15013).